Consider the following 887-residue polypeptide: CWF19-like protein 2 (887 aa).

Residues 1-143 form a disordered region; sequence MEAFSVRFES…DKRTEEECDS (143 aa). Residues 11–103 are a coiled coil; that stretch reads ASSIEERKEQ…KKQKCQKQSE (93 aa). Over residues 14 to 72 the composition is skewed to basic and acidic residues; that stretch reads IEERKEQTRNARAEVLRQAKHNFEKEQRGEERKRLRDEDTWMLPDVHERIEQFSQEHSE. Residue Ser71 is modified to Phosphoserine. Residues 73–98 are compositionally biased toward basic residues; sequence KKKKKKDKHSKKVKKEKKKKRKKQKC. Positions 99 to 110 are enriched in low complexity; the sequence is QKQSESTDSSAS. Positions 124–143 are enriched in basic and acidic residues; the sequence is SDKEKTWKVKDKRTEEECDS. Residues 164–254 adopt a coiled-coil conformation; it reads SSSLKAEKET…RNFEDIVAEK (91 aa). Lys168 participates in a covalent cross-link: Glycyl lysine isopeptide (Lys-Gly) (interchain with G-Cter in SUMO2). 2 disordered regions span residues 315 to 370 and 405 to 447; these read LEME…DEDE and SEES…GRRE. The segment covering 342 to 352 has biased composition (basic and acidic residues); that stretch reads CRRESALRKNQ. Phosphoserine occurs at positions 354 and 366. Basic and acidic residues predominate over residues 414-430; the sequence is RSDRRQENRKPSDKKPL. A compositionally biased stretch (polar residues) spans 433 to 442; it reads WSYNANQHST. Phosphoserine is present on Ser478. Residues 495–524 adopt a coiled-coil conformation; that stretch reads IKAEMMGNMELAEQLKAQLKEANKFKETQM. Lys597 participates in a covalent cross-link: Glycyl lysine isopeptide (Lys-Gly) (interchain with G-Cter in SUMO2). At Ser622 the chain carries Phosphoserine.

It belongs to the CWF19 family.

This chain is CWF19-like protein 2 (Cwf19l2), found in Mus musculus (Mouse).